The sequence spans 209 residues: Kynurenine formamidase (209 aa).

Tryptophan 19 contacts substrate. The Zn(2+) site is built by histidine 49, histidine 53, and aspartate 55. The active-site Proton donor/acceptor is histidine 59. Zn(2+) contacts are provided by histidine 160 and glutamate 172.

The protein belongs to the Cyclase 1 superfamily. KynB family. In terms of assembly, homodimer. Requires Zn(2+) as cofactor.

The enzyme catalyses N-formyl-L-kynurenine + H2O = L-kynurenine + formate + H(+). It participates in amino-acid degradation; L-tryptophan degradation via kynurenine pathway; L-kynurenine from L-tryptophan: step 2/2. Functionally, catalyzes the hydrolysis of N-formyl-L-kynurenine to L-kynurenine, the second step in the kynurenine pathway of tryptophan degradation. The chain is Kynurenine formamidase from Geobacillus thermodenitrificans (strain NG80-2).